The sequence spans 198 residues: Beta-crystallin A1-1 (198 aa).

The N-terminal arm stretch occupies residues 1–13 (MAQINPLPVPLGP). 2 Beta/gamma crystallin 'Greek key' domains span residues 14–53 (WKITVYDQENFQGKRMEFTSSCTNIMECGFDNIRSLKVEC) and 54–100 (GAWI…RPIC). Residues 101–106 (SANHKE) form a connecting peptide region. Beta/gamma crystallin 'Greek key' domains are found at residues 107–148 (SKLV…KVQC) and 149–197 (GAWV…RRIQ).

It belongs to the beta/gamma-crystallin family. As to quaternary structure, homo/heterodimer, or complexes of higher-order. The structure of beta-crystallin oligomers seems to be stabilized through interactions between the N-terminal arms. The N-terminus is blocked.

Its function is as follows. Crystallins are the dominant structural components of the vertebrate eye lens. This is Beta-crystallin A1-1 from Aquarana catesbeiana (American bullfrog).